The primary structure comprises 137 residues: Peptide methionine sulfoxide reductase MsrB (137 aa).

Residues 7-129 (PEELKNGLSE…NSASLSFTDE (123 aa)) form the MsrB domain. The Zn(2+) site is built by Cys46, Cys49, Cys95, and Cys98. Residue Cys118 is the Nucleophile of the active site.

This sequence belongs to the MsrB Met sulfoxide reductase family. The cofactor is Zn(2+).

The enzyme catalyses L-methionyl-[protein] + [thioredoxin]-disulfide + H2O = L-methionyl-(R)-S-oxide-[protein] + [thioredoxin]-dithiol. This Klebsiella pneumoniae subsp. pneumoniae (strain ATCC 700721 / MGH 78578) protein is Peptide methionine sulfoxide reductase MsrB.